The primary structure comprises 519 residues: Ribonuclease Y (519 aa).

The chain crosses the membrane as a helical span at residues 3-23 (LIEIVLLLVGMAVGAATGFIL). The region spanning 209 to 272 (TVTAVSLPSE…QIAKMALERL (64 aa)) is the KH domain. The HD domain occupies 335–428 (VLQHSMEVAS…VQAADSLSGA (94 aa)).

This sequence belongs to the RNase Y family.

Its subcellular location is the cell membrane. In terms of biological role, endoribonuclease that initiates mRNA decay. This is Ribonuclease Y from Oleidesulfovibrio alaskensis (strain ATCC BAA-1058 / DSM 17464 / G20) (Desulfovibrio alaskensis).